We begin with the raw amino-acid sequence, 342 residues long: Tetraacyldisaccharide 4'-kinase (342 aa).

68 to 75 is a binding site for ATP; the sequence is TVGGTGKT.

The protein belongs to the LpxK family.

It catalyses the reaction a lipid A disaccharide + ATP = a lipid IVA + ADP + H(+). Its pathway is glycolipid biosynthesis; lipid IV(A) biosynthesis; lipid IV(A) from (3R)-3-hydroxytetradecanoyl-[acyl-carrier-protein] and UDP-N-acetyl-alpha-D-glucosamine: step 6/6. Functionally, transfers the gamma-phosphate of ATP to the 4'-position of a tetraacyldisaccharide 1-phosphate intermediate (termed DS-1-P) to form tetraacyldisaccharide 1,4'-bis-phosphate (lipid IVA). This is Tetraacyldisaccharide 4'-kinase from Burkholderia pseudomallei (strain K96243).